A 312-amino-acid chain; its full sequence is Golgi to ER traffic protein 2 (312 aa).

Topologically, residues 1–175 (MSDSPSISAE…VQYNTYRHQV (175 aa)) are cytoplasmic. Residues 176–196 (WKFRFLAVRYFALLANFIYHF) traverse the membrane as a helical segment. Residues 197-224 (YIIGDSISFASSSHQFIRELIPVEPARS) lie on the Lumenal side of the membrane. A helical membrane pass occupies residues 225-244 (FFTLFSTIEVVIIASYYFLG). Residues 245–288 (TKEGFFSTATSNNFVVKLLDMGSMVLPQLQQFKTIAVRLLGYYE) are Cytoplasmic-facing. A helical membrane pass occupies residues 289–309 (LLAVLLGDLSLVVVLFGLHSV). Topologically, residues 310 to 312 (LGN) are lumenal.

It belongs to the GET2 family. As to quaternary structure, component of the Golgi to ER traffic (GET) complex, which is composed of GET1, GET2 and GET3. Within the complex, GET1 and GET2 form a heterotetramer which is stabilized by phosphatidylinositol binding and which binds to the GET3 homodimer.

Its subcellular location is the endoplasmic reticulum membrane. The protein localises to the golgi apparatus membrane. In terms of biological role, required for the post-translational delivery of tail-anchored (TA) proteins to the endoplasmic reticulum. Together with GET1, acts as a membrane receptor for soluble GET3, which recognizes and selectively binds the transmembrane domain of TA proteins in the cytosol. The GET complex cooperates with the HDEL receptor ERD2 to mediate the ATP-dependent retrieval of resident ER proteins that contain a C-terminal H-D-E-L retention signal from the Golgi to the ER. This chain is Golgi to ER traffic protein 2, found in Scheffersomyces stipitis (strain ATCC 58785 / CBS 6054 / NBRC 10063 / NRRL Y-11545) (Yeast).